The chain runs to 382 residues: uncharacterized protein (382 aa).

11 consecutive transmembrane segments (helical) span residues 8-28 (VLLL…LNTL), 41-61 (WQVG…TLIA), 73-93 (SYHC…LTVD), 94-114 (FWSW…IWVI), 133-153 (AAYM…LGIV), 157-177 (LLSV…PLLF), 208-228 (GCII…LYLS), 235-255 (ASVG…QWPM), 274-294 (VVIL…ALFI), 325-345 (ALLM…SLLM), and 349-369 (SDNL…MMLL).

It belongs to the major facilitator superfamily. YcaD (TC 2.A.1.26) family.

Its subcellular location is the cell inner membrane. This is an uncharacterized protein from Yersinia pseudotuberculosis serotype IB (strain PB1/+).